The following is a 184-amino-acid chain: MSRIANKPIVIPNGVEVKVENNVFKVKGPKGELSQEFLPYIKIEVNENEIYVKPNLEFMKRKSDLKKMKMFTGTYWRLFNNMIIGVTQGFRKELEIIGIGYRAQLQGKKLVMNLGYAHPVEMEIPSDVAVEVPSPNRIVVSGIDKQRVGQVAADIRRWREPNVYSGKGIRYVGEVVRLKEGKKA.

The protein belongs to the universal ribosomal protein uL6 family. In terms of assembly, part of the 50S ribosomal subunit.

This protein binds to the 23S rRNA, and is important in its secondary structure. It is located near the subunit interface in the base of the L7/L12 stalk, and near the tRNA binding site of the peptidyltransferase center. The protein is Large ribosomal subunit protein uL6 of Thermosipho melanesiensis (strain DSM 12029 / CIP 104789 / BI429).